Here is a 149-residue protein sequence, read N- to C-terminus: Pleckstrin homology domain-containing family J member 1 (149 aa).

Residues 15-108 (PAEMAAELGM…WMEALRRASY (94 aa)) enclose the PH domain.

In terms of tissue distribution, expressed in testis and liver.

The polypeptide is Pleckstrin homology domain-containing family J member 1 (PLEKHJ1) (Homo sapiens (Human)).